Here is a 472-residue protein sequence, read N- to C-terminus: Coronin-6 (472 aa).

WD repeat units follow at residues 79-119 (GHTG…PVRN), 129-169 (GHSK…VLLS), 173-212 (IHPDVIHSVCWNSNGSLLATTCKDKTLRIIDPRKSQVVAE), 216-259 (AHEG…EPVA), and 264-304 (DTSN…PFVH). The segment at 409-434 (NILDVRPPASPRRSQSASEAPLSQQH) is disordered. Positions 419–429 (PRRSQSASEAP) are enriched in low complexity. A coiled-coil region spans residues 430–469 (LSQQHTLETLLEEMKALRERVQAQEERITALENMLCELVD).

The protein is Coronin-6 (Coro6) of Rattus norvegicus (Rat).